We begin with the raw amino-acid sequence, 100 residues long: Signal recognition particle 19 kDa protein (100 aa).

This sequence belongs to the SRP19 family. In terms of assembly, part of the signal recognition particle protein translocation system, which is composed of SRP and FtsY. Archaeal SRP consists of a 7S RNA molecule of 300 nucleotides and two protein subunits: SRP54 and SRP19.

The protein resides in the cytoplasm. Its function is as follows. Involved in targeting and insertion of nascent membrane proteins into the cytoplasmic membrane. Binds directly to 7S RNA and mediates binding of the 54 kDa subunit of the SRP. This chain is Signal recognition particle 19 kDa protein, found in Pyrococcus furiosus (strain ATCC 43587 / DSM 3638 / JCM 8422 / Vc1).